The following is a 504-amino-acid chain: Aromatic and large neutral amino acid transporter 5-3 (504 aa).

Residues 1–24 are disordered; it reads MESTEATMVERKAESPSSGDRARS. Residues 8-24 are compositionally biased toward basic and acidic residues; sequence MVERKAESPSSGDRARS. 6 consecutive transmembrane segments (helical) span residues 76–96, 138–158, 165–185, 206–226, 233–253, and 256–276; these read YVVL…FMNW, HLFT…GIML, FGAL…GFSS, FFPC…IIAV, ISFI…GATF, and VMLG…LFII. A glycan (N-linked (GlcNAc...) asparagine) is linked at N310. Transmembrane regions (helical) follow at residues 324-344, 356-376, 381-401, 406-426, 436-456, and 475-495; these read LSFL…LFFA, EANQ…GGIA, IVPV…LMLI, CFAA…SFLV, IFYP…GGII, and MTVL…FMYV.

It belongs to the SLC43A transporter (TC 2.A.1.44) family.

It is found in the cell membrane. The enzyme catalyses L-tyrosine(in) = L-tyrosine(out). With respect to regulation, L-tyrosine uptake is stimulated in trans by aromatic and large neutral amino acids, but not smaller or charged amino acids. Functionally, L-tyrosine transporter that is essential for parasite survival and virulence. May also act as an aromatic and large neutral amino acid transporter. Does not cotransport other charged ions. Involved in amino acid homeostasis by facilitating the net uptake of L-tyrosine and maintaining intracellular pools of aromatic and large neutral amino acids through exchange. The polypeptide is Aromatic and large neutral amino acid transporter 5-3 (Toxoplasma gondii).